Here is a 439-residue protein sequence, read N- to C-terminus: C4-dicarboxylate transport protein (439 aa).

9 consecutive transmembrane segments (helical) span residues 9-29 (HLYF…YYLP), 45-65 (MIKM…IAGM), 80-100 (LYFE…INII), 150-170 (GEIL…SAMG), 186-206 (AFFG…FGAM), 221-241 (LGML…VVLG), 291-311 (VVGL…SIYL), 334-354 (ILGV…SGFV), and 357-377 (AATF…ILGI).

The protein belongs to the dicarboxylate/amino acid:cation symporter (DAACS) (TC 2.A.23) family.

It is found in the cell inner membrane. Functionally, responsible for the transport of dicarboxylates such as succinate, fumarate, and malate from the periplasm across the membrane. This is C4-dicarboxylate transport protein from Geobacter sp. (strain M21).